Consider the following 505-residue polypeptide: Glutamate--tRNA ligase (505 aa).

The short motif at 12 to 22 (PSPTGDPHVGT) is the 'HIGH' region element. The short motif at 253 to 257 (KLSKR) is the 'KMSKS' region element. K256 is an ATP binding site.

Belongs to the class-I aminoacyl-tRNA synthetase family. Glutamate--tRNA ligase type 1 subfamily. Monomer.

It is found in the cytoplasm. It carries out the reaction tRNA(Glu) + L-glutamate + ATP = L-glutamyl-tRNA(Glu) + AMP + diphosphate. In terms of biological role, catalyzes the attachment of glutamate to tRNA(Glu) in a two-step reaction: glutamate is first activated by ATP to form Glu-AMP and then transferred to the acceptor end of tRNA(Glu). The polypeptide is Glutamate--tRNA ligase (Chlamydia abortus (strain DSM 27085 / S26/3) (Chlamydophila abortus)).